Reading from the N-terminus, the 1247-residue chain is E3 ubiquitin-protein ligase hecw-1 (1247 aa).

The WW 1 domain maps to 602 to 635; it reads TPPESHWKTYLDAKKRKFYVNHVTKETRWTKPDT. A disordered region spans residues 633 to 659; sequence PDTLNNNHIEPETPVHKRLSDRSASPR. A compositionally biased stretch (basic and acidic residues) spans 641–653; sequence IEPETPVHKRLSD. One can recognise a WW 2 domain in the interval 745 to 777; the sequence is QPLPSGWECITMNNRTVFLNHANKETSFYDPRI. Positions 914 to 1247 constitute an HECT domain; that stretch reads DPFVLKKSRL…IVNGMSYSIE (334 aa). The active-site Glycyl thioester intermediate is Cys1215.

In terms of tissue distribution, expressed in the nervous system throughout the body. In the anterior ganglion, expression is limited to the two lateral outer labial neurons OLLL and OLLR.

Its subcellular location is the cytoplasm. The catalysed reaction is S-ubiquitinyl-[E2 ubiquitin-conjugating enzyme]-L-cysteine + [acceptor protein]-L-lysine = [E2 ubiquitin-conjugating enzyme]-L-cysteine + N(6)-ubiquitinyl-[acceptor protein]-L-lysine.. The protein operates within protein modification; protein ubiquitination. Functionally, E3 ubiquitin-protein ligase. Functions in the OLL neurons in the anterior ganglion to inhibit avoidance to microbial pathogens such as P.aeruginosa although worms do display avoidance behavior, vacating a P.aeruginosa lawn within 24 hours. Likely to act by inhibiting the neuropeptide receptor npr-1. The protein is E3 ubiquitin-protein ligase hecw-1 of Caenorhabditis elegans.